The following is a 137-amino-acid chain: Small ribosomal subunit protein uS12 (137 aa).

The segment at 1 to 57 (MPTINQLVRKPRKSKVEKSKSPALNVGYNSHKKVQTNVSSPQKRGVATRVGTMTPKK) is disordered. Asp-102 is modified (3-methylthioaspartic acid).

The protein belongs to the universal ribosomal protein uS12 family. In terms of assembly, part of the 30S ribosomal subunit. Contacts proteins S8 and S17. May interact with IF1 in the 30S initiation complex.

Functionally, with S4 and S5 plays an important role in translational accuracy. Interacts with and stabilizes bases of the 16S rRNA that are involved in tRNA selection in the A site and with the mRNA backbone. Located at the interface of the 30S and 50S subunits, it traverses the body of the 30S subunit contacting proteins on the other side and probably holding the rRNA structure together. The combined cluster of proteins S8, S12 and S17 appears to hold together the shoulder and platform of the 30S subunit. The polypeptide is Small ribosomal subunit protein uS12 (Streptococcus pneumoniae serotype 2 (strain D39 / NCTC 7466)).